A 468-amino-acid chain; its full sequence is Arginine biosynthesis bifunctional protein ArgJ, mitochondrial (468 aa).

Residues 1–23 (MVGFSRCALSQLRQPKAQLVRSF) constitute a mitochondrion transit peptide. Residues threonine 198, lysine 227, threonine 238, glutamate 324, asparagine 463, and threonine 468 each coordinate substrate. The Nucleophile role is filled by threonine 238.

Belongs to the ArgJ family. In terms of assembly, heterodimer of an alpha and a beta chain. Post-translationally, the alpha and beta chains are autoproteolytically processed from a single precursor protein within the mitochondrion.

The protein resides in the mitochondrion matrix. It carries out the reaction N(2)-acetyl-L-ornithine + L-glutamate = N-acetyl-L-glutamate + L-ornithine. It catalyses the reaction L-glutamate + acetyl-CoA = N-acetyl-L-glutamate + CoA + H(+). Its pathway is amino-acid biosynthesis; L-arginine biosynthesis; L-ornithine and N-acetyl-L-glutamate from L-glutamate and N(2)-acetyl-L-ornithine (cyclic): step 1/1. It functions in the pathway amino-acid biosynthesis; L-arginine biosynthesis; N(2)-acetyl-L-ornithine from L-glutamate: step 1/4. In terms of biological role, catalyzes two activities which are involved in the cyclic version of arginine biosynthesis: the synthesis of acetylglutamate from glutamate and acetyl-CoA, and of ornithine by transacetylation between acetylornithine and glutamate. This Podospora anserina (strain S / ATCC MYA-4624 / DSM 980 / FGSC 10383) (Pleurage anserina) protein is Arginine biosynthesis bifunctional protein ArgJ, mitochondrial.